The following is a 316-amino-acid chain: WSCD family member GA21586 (316 aa).

The chain crosses the membrane as a helical span at residues 8-28 (FFGVSATIIIYIGGVLFLSMN). N-linked (GlcNAc...) asparagine glycosylation is found at N78, N150, N226, and N232.

It belongs to the WSCD family.

It localises to the membrane. The protein is WSCD family member GA21586 of Drosophila pseudoobscura pseudoobscura (Fruit fly).